Here is a 756-residue protein sequence, read N- to C-terminus: 1,4-alpha-glucan branching enzyme GlgB (756 aa).

The active-site Nucleophile is the aspartate 425. The active-site Proton donor is the glutamate 478.

The protein belongs to the glycosyl hydrolase 13 family. GlgB subfamily. Monomer.

The enzyme catalyses Transfers a segment of a (1-&gt;4)-alpha-D-glucan chain to a primary hydroxy group in a similar glucan chain.. It functions in the pathway glycan biosynthesis; glycogen biosynthesis. Functionally, catalyzes the formation of the alpha-1,6-glucosidic linkages in glycogen by scission of a 1,4-alpha-linked oligosaccharide from growing alpha-1,4-glucan chains and the subsequent attachment of the oligosaccharide to the alpha-1,6 position. The sequence is that of 1,4-alpha-glucan branching enzyme GlgB from Cupriavidus necator (strain ATCC 17699 / DSM 428 / KCTC 22496 / NCIMB 10442 / H16 / Stanier 337) (Ralstonia eutropha).